The primary structure comprises 624 residues: Chaperone protein DnaK (624 aa).

Thr-174 carries the phosphothreonine; by autocatalysis modification. Disordered stretches follow at residues 470 to 504 and 577 to 624; these read ITIK…KEEV and NGGA…DPDK. Basic and acidic residues predominate over residues 481-504; it reads EEIKKMQKDAEEHAEEDKKRKEEV. Residues 577 to 605 show a composition bias toward low complexity; the sequence is NGGAQGAAGQAGPQGPQNGGQPNNDNGSD. Over residues 615–624 the composition is skewed to basic and acidic residues; that stretch reads GDFHKVDPDK.

This sequence belongs to the heat shock protein 70 family.

Its function is as follows. Acts as a chaperone. In Lactobacillus johnsonii (strain CNCM I-12250 / La1 / NCC 533), this protein is Chaperone protein DnaK.